Consider the following 292-residue polypeptide: ATP synthase gamma chain (292 aa).

It belongs to the ATPase gamma chain family. In terms of assembly, F-type ATPases have 2 components, CF(1) - the catalytic core - and CF(0) - the membrane proton channel. CF(1) has five subunits: alpha(3), beta(3), gamma(1), delta(1), epsilon(1). CF(0) has three main subunits: a, b and c.

Its subcellular location is the cell inner membrane. Functionally, produces ATP from ADP in the presence of a proton gradient across the membrane. The gamma chain is believed to be important in regulating ATPase activity and the flow of protons through the CF(0) complex. This is ATP synthase gamma chain from Nitrobacter winogradskyi (strain ATCC 25391 / DSM 10237 / CIP 104748 / NCIMB 11846 / Nb-255).